We begin with the raw amino-acid sequence, 182 residues long: FMN reductase (NADH) RutF (182 aa).

It belongs to the non-flavoprotein flavin reductase family. RutF subfamily.

The enzyme catalyses FMNH2 + NAD(+) = FMN + NADH + 2 H(+). Its function is as follows. Catalyzes the reduction of FMN to FMNH2 which is used to reduce pyrimidine by RutA via the Rut pathway. This Yersinia enterocolitica serotype O:8 / biotype 1B (strain NCTC 13174 / 8081) protein is FMN reductase (NADH) RutF.